Here is a 282-residue protein sequence, read N- to C-terminus: Formamidopyrimidine-DNA glycosylase (282 aa).

The active-site Schiff-base intermediate with DNA is the proline 2. Glutamate 3 serves as the catalytic Proton donor. Lysine 58 (proton donor; for beta-elimination activity) is an active-site residue. Residues histidine 96, arginine 115, and lysine 152 each coordinate DNA. The FPG-type zinc-finger motif lies at 238-272 (HVYGRGGQPCERCGEEILKTVLGGRGTHYCPSCQN). The active-site Proton donor; for delta-elimination activity is arginine 262.

Belongs to the FPG family. In terms of assembly, monomer. The cofactor is Zn(2+).

It catalyses the reaction Hydrolysis of DNA containing ring-opened 7-methylguanine residues, releasing 2,6-diamino-4-hydroxy-5-(N-methyl)formamidopyrimidine.. It carries out the reaction 2'-deoxyribonucleotide-(2'-deoxyribose 5'-phosphate)-2'-deoxyribonucleotide-DNA = a 3'-end 2'-deoxyribonucleotide-(2,3-dehydro-2,3-deoxyribose 5'-phosphate)-DNA + a 5'-end 5'-phospho-2'-deoxyribonucleoside-DNA + H(+). Functionally, involved in base excision repair of DNA damaged by oxidation or by mutagenic agents. Acts as a DNA glycosylase that recognizes and removes damaged bases. Has a preference for oxidized purines, such as 7,8-dihydro-8-oxoguanine (8-oxoG). Has AP (apurinic/apyrimidinic) lyase activity and introduces nicks in the DNA strand. Cleaves the DNA backbone by beta-delta elimination to generate a single-strand break at the site of the removed base with both 3'- and 5'-phosphates. This chain is Formamidopyrimidine-DNA glycosylase, found in Corynebacterium aurimucosum (strain ATCC 700975 / DSM 44827 / CIP 107346 / CN-1) (Corynebacterium nigricans).